Reading from the N-terminus, the 239-residue chain is Small ribosomal subunit protein uS5 (239 aa).

The interval 1-62 (MADETEIQAA…DDRRGSEEQG (62 aa)) is disordered. The segment covering 9 to 19 (AAAPAEAAPGA) has biased composition (low complexity). Basic and acidic residues predominate over residues 34–62 (GGNDRGGDRGRGRDGRGRRDDRRGSEEQG). The S5 DRBM domain maps to 65–128 (LIEKLVHINR…AAAKKAMVRV (64 aa)).

This sequence belongs to the universal ribosomal protein uS5 family. As to quaternary structure, part of the 30S ribosomal subunit. Contacts proteins S4 and S8.

Its function is as follows. With S4 and S12 plays an important role in translational accuracy. Located at the back of the 30S subunit body where it stabilizes the conformation of the head with respect to the body. This chain is Small ribosomal subunit protein uS5, found in Rhizorhabdus wittichii (strain DSM 6014 / CCUG 31198 / JCM 15750 / NBRC 105917 / EY 4224 / RW1) (Sphingomonas wittichii).